The sequence spans 320 residues: Ribose-phosphate pyrophosphokinase (320 aa).

Residues 43-45 (DGE) and 102-103 (RQ) contribute to the ATP site. Mg(2+)-binding residues include H136 and D178. K201 is an active-site residue. D-ribose 5-phosphate contacts are provided by residues R203, D227, and 231-235 (DTAGT).

Belongs to the ribose-phosphate pyrophosphokinase family. Class I subfamily. Homohexamer. Requires Mg(2+) as cofactor.

The protein localises to the cytoplasm. It catalyses the reaction D-ribose 5-phosphate + ATP = 5-phospho-alpha-D-ribose 1-diphosphate + AMP + H(+). Its pathway is metabolic intermediate biosynthesis; 5-phospho-alpha-D-ribose 1-diphosphate biosynthesis; 5-phospho-alpha-D-ribose 1-diphosphate from D-ribose 5-phosphate (route I): step 1/1. In terms of biological role, involved in the biosynthesis of the central metabolite phospho-alpha-D-ribosyl-1-pyrophosphate (PRPP) via the transfer of pyrophosphoryl group from ATP to 1-hydroxyl of ribose-5-phosphate (Rib-5-P). This is Ribose-phosphate pyrophosphokinase from Clostridium tetani (strain Massachusetts / E88).